A 550-amino-acid polypeptide reads, in one-letter code: MFCVQCEQTIRTPAGNGCSYSQGMCGKTAETSDLQDLLIAALQGLSAWAAKAREYGIVDHYVDNFAPRAFFSTLTNVNFDSPRIVGYAREAIALREALKAQSLNADANAAVDNPMADLQLVSDDLGDLQRQAAEFTPNKDKAAIGENILGLRLLCLYGLKGAAAYMEHAHVLGQYDNDIYAQYHKIMAWLGTWPSDMNALLECSMEIGQMNFKVMSILDAGETDTYGHPTPTQVNVKATAGKCILISGHDLKDLYNLLQQTEGTGVNVYTHGEMLPAHGYPELRKFKHLVGNYGSGWQNQQVEFARFPGPIVMTSNCIIDPTVGSYDDRIWTRSIVGWPGVSHLEGDDFAPVITQAQQMAGFPFSEIEHMITVGFGRETLLGAADSLIDLVSREKLRHIFLVGGCDGARGERNYFTDFATSVPQDCLILTLACGKYRFNKLDFGDIEGLPRLIDAGQCNDAYSAIILAVTLAEKLGCGVNDLPLSLVLSWFEQKAIVILLTLLSLGVTNIVTGPTAPGFLTPDLLAVLNEKFGLRSVTTVEEDMQQLLSA.

[2Fe-2S] cluster contacts are provided by C3, C6, C18, and C25. H249, E273, C317, C405, C433, C458, E492, and K494 together coordinate hybrid [4Fe-2O-2S] cluster. Cysteine persulfide is present on C405.

It belongs to the HCP family. Requires [2Fe-2S] cluster as cofactor. Hybrid [4Fe-2O-2S] cluster is required as a cofactor.

It is found in the cytoplasm. The catalysed reaction is A + NH4(+) + H2O = hydroxylamine + AH2 + H(+). In terms of biological role, catalyzes the reduction of hydroxylamine to form NH(3) and H(2)O. This is Hydroxylamine reductase from Enterobacter sp. (strain 638).